Reading from the N-terminus, the 330-residue chain is DNA-directed RNA polymerase subunit alpha (330 aa).

Residues 1–236 (MQGSVTEFLK…EQLDAFVDLR (236 aa)) form an alpha N-terminal domain (alpha-NTD) region. The interval 250–330 (FDPILLRPVD…NWPPASIAED (81 aa)) is alpha C-terminal domain (alpha-CTD).

This sequence belongs to the RNA polymerase alpha chain family. Homodimer. The RNAP catalytic core consists of 2 alpha, 1 beta, 1 beta' and 1 omega subunit. When a sigma factor is associated with the core the holoenzyme is formed, which can initiate transcription.

The catalysed reaction is RNA(n) + a ribonucleoside 5'-triphosphate = RNA(n+1) + diphosphate. In terms of biological role, DNA-dependent RNA polymerase catalyzes the transcription of DNA into RNA using the four ribonucleoside triphosphates as substrates. This chain is DNA-directed RNA polymerase subunit alpha, found in Vibrio cholerae serotype O1 (strain ATCC 39315 / El Tor Inaba N16961).